Consider the following 720-residue polypeptide: Fatty acid CoA ligase Acsl3 (720 aa).

The helical; Signal-anchor for type III membrane protein transmembrane segment at 21–41 (ILLYFIHFIISLYTILTYIPF) threads the bilayer. At 42 to 720 (YFLCESKQEK…ADIERMYGRK (679 aa)) the chain is on the cytoplasmic side. A Phosphoserine modification is found at S683.

It belongs to the ATP-dependent AMP-binding enzyme family. Requires Mg(2+) as cofactor. In terms of tissue distribution, predominantly expressed in the brain, and to a much lesser extent, in lung, adrenal gland, kidney, small intestine, and adipose tissue but not detected in heart or liver.

The protein localises to the mitochondrion outer membrane. Its subcellular location is the peroxisome membrane. It localises to the microsome membrane. The protein resides in the endoplasmic reticulum membrane. It carries out the reaction a long-chain fatty acid + ATP + CoA = a long-chain fatty acyl-CoA + AMP + diphosphate. It catalyses the reaction (5Z,8Z,11Z,14Z)-eicosatetraenoate + ATP + CoA = (5Z,8Z,11Z,14Z)-eicosatetraenoyl-CoA + AMP + diphosphate. The catalysed reaction is a medium-chain fatty acid + ATP + CoA = a medium-chain fatty acyl-CoA + AMP + diphosphate. The enzyme catalyses 15-hydroxy-(5Z,8Z,11Z,13E)-eicosatetraenoate + ATP + CoA = 15-hydroxy-(5Z,8Z,11Z,13E)-eicosatetraenoyl-CoA + AMP + diphosphate. It carries out the reaction 12-hydroxy-(5Z,8Z,10E,14Z)-eicosatetraenoate + ATP + CoA = 12-hydroxy-(5Z,8Z,10E,14Z)-eicosatetraenoyl-CoA + AMP + diphosphate. It catalyses the reaction 5-hydroxy-(6E,8Z,11Z,14Z)-eicosatetraenoate + ATP + CoA = 5-hydroxy-(6E,8Z,11Z,14Z)-eicosatetraenoyl-CoA + AMP + diphosphate. The catalysed reaction is 14,15-epoxy-(5Z,8Z,11Z)-eicosatrienoate + ATP + CoA = 14,15-epoxy-(5Z,8Z,11Z)-eicosatrienoyl-CoA + AMP + diphosphate. The enzyme catalyses 11,12-epoxy-(5Z,8Z,14Z)-eicosatrienoate + ATP + CoA = 11,12-epoxy-(5Z,8Z,14Z)-eicosatrienoyl-CoA + AMP + diphosphate. It carries out the reaction (E)-hexadec-2-enoate + ATP + CoA = (2E)-hexadecenoyl-CoA + AMP + diphosphate. It catalyses the reaction hexadecanoate + ATP + CoA = hexadecanoyl-CoA + AMP + diphosphate. The catalysed reaction is tetradecanoate + ATP + CoA = tetradecanoyl-CoA + AMP + diphosphate. The enzyme catalyses dodecanoate + ATP + CoA = dodecanoyl-CoA + AMP + diphosphate. It carries out the reaction octadecanoate + ATP + CoA = octadecanoyl-CoA + AMP + diphosphate. It catalyses the reaction eicosanoate + ATP + CoA = eicosanoyl-CoA + AMP + diphosphate. The catalysed reaction is (9Z)-octadecenoate + ATP + CoA = (9Z)-octadecenoyl-CoA + AMP + diphosphate. The enzyme catalyses (9Z)-hexadecenoate + ATP + CoA = (9Z)-hexadecenoyl-CoA + AMP + diphosphate. It carries out the reaction (9Z,12Z)-octadecadienoate + ATP + CoA = (9Z,12Z)-octadecadienoyl-CoA + AMP + diphosphate. It catalyses the reaction (9Z,12Z,15Z)-octadecatrienoate + ATP + CoA = (9Z,12Z,15Z)-octadecatrienoyl-CoA + AMP + diphosphate. The catalysed reaction is (4Z,7Z,10Z,13Z,16Z,19Z)-docosahexaenoate + ATP + CoA = (4Z,7Z,10Z,13Z,16Z,19Z)-docosahexaenoyl-CoA + AMP + diphosphate. The enzyme catalyses (5Z,8Z,11Z,14Z,17Z)-eicosapentaenoate + ATP + CoA = (5Z,8Z,11Z,14Z,17Z)-eicosapentaenoyl-CoA + AMP + diphosphate. It carries out the reaction a fatty acid + ATP + CoA = a fatty acyl-CoA + AMP + diphosphate. In terms of biological role, catalyzes the conversion of long-chain fatty acids to their active form acyl-CoA for both synthesis of cellular lipids, and degradation via beta-oxidation. ACSL3 is required for the incorporation of fatty acids into phosphatidylcholine, the major phospholipid located on the surface of VLDL (very low density lipoproteins). Has mainly an anabolic role in energy metabolism. Mediates hepatic lipogenesis. Preferentially uses myristate, laurate, arachidonate and eicosapentaenoate as substrates. Both isoforms exhibit the same level of activity. The chain is Fatty acid CoA ligase Acsl3 from Rattus norvegicus (Rat).